Here is a 65-residue protein sequence, read N- to C-terminus: Large ribosomal subunit protein bL35 (65 aa).

A disordered region spans residues 1–26 (MPKMKTHRGAAKRFKKTGSGKLKRAK).

It belongs to the bacterial ribosomal protein bL35 family.

This is Large ribosomal subunit protein bL35 from Clostridium novyi (strain NT).